Reading from the N-terminus, the 961-residue chain is DNA repair endonuclease XPF (961 aa).

3 disordered regions span residues 1-27, 451-485, and 674-693; these read MADS…SADT, NYAK…PPLA, and PTDE…QATK. Residues 13 to 22 are compositionally biased toward basic and acidic residues; that stretch reads TENERPKEVE. Residues 458–469 are compositionally biased toward polar residues; that stretch reads TRSAPPKNVSSN. The region spanning 697 to 777 is the ERCC4 domain; sequence KVIVDMREFR…KPILLIEFDQ (81 aa).

Belongs to the XPF family. In terms of assembly, heterodimer. Interacts with hdm.

The protein localises to the nucleus. Its function is as follows. Implicated in recombination events during meiosis, mostly in meiotic exchange. May directly resolve Holliday junctions within recombination intermediates leading to DNA exchange. Also required for the repair of mismatches within meiotic heteroduplex DNA and for nucleotide excision repair. In Drosophila melanogaster (Fruit fly), this protein is DNA repair endonuclease XPF (mei-9).